Reading from the N-terminus, the 28-residue chain is Nicotinic acetylcholine receptor-binding protein Mnn-3C (28 aa).

A disulfide bridge links Cys3 with Cys24.

The protein belongs to the three-finger toxin family. Short-chain subfamily. In terms of tissue distribution, expressed by the venom gland.

It is found in the secreted. In terms of biological role, binds and may inhibit nicotinic acetylcholine receptors (nAChR). This chain is Nicotinic acetylcholine receptor-binding protein Mnn-3C, found in Micrurus nigrocinctus (Central American coral snake).